The chain runs to 188 residues: Myc target protein 1 (188 aa).

A helical transmembrane segment spans residues 24–44 (FTVSVAIGLAIGGFLWALFVF). Positions 47-65 (RRRRASAPISQWSPTRRPR) match the Bipartite nuclear localization signal motif. Residues S87, S90, S93, and S101 each carry the phosphoserine modification.

It belongs to the MYCT1 family. In terms of tissue distribution, highly expressed in lung, heart, and skeletal muscle. Expressed in brain, eye, liver, kidney, smooth muscle, pancreas, thyroid, thymus, submaxillary gland, spleen, testis, ovary, prostate, epididymis, and uterus. Deregulated expression promotes apoptosis in response to growth factor deprivation. Overexpression in synergy with CCNB1 may promote genomic instability.

Its subcellular location is the nucleus membrane. Functionally, may regulate certain MYC target genes, MYC seems to be a direct upstream transcriptional activator. Does not seem to significantly affect growth cell capacity. Overexpression seems to mediate many of the known phenotypic features associated with MYC, including promotion of apoptosis, alteration of morphology, enhancement of anchorage-independent growth, tumorigenic conversion, promotion of genomic instability and inhibition of hematopoietic differentiation. The polypeptide is Myc target protein 1 (Myct1) (Mus musculus (Mouse)).